Consider the following 285-residue polypeptide: Pseudouridine-5'-phosphate glycosidase (285 aa).

Residue Glu-17 is the Proton donor of the active site. Substrate contacts are provided by Lys-77 and Val-97. Position 126 (Asp-126) interacts with Mn(2+). 128–130 provides a ligand contact to substrate; the sequence is SQD. Lys-147 functions as the Nucleophile in the catalytic mechanism.

The protein belongs to the pseudouridine-5'-phosphate glycosidase family. Homotrimer. The cofactor is Mn(2+).

The catalysed reaction is D-ribose 5-phosphate + uracil = psi-UMP + H2O. Functionally, catalyzes the reversible cleavage of pseudouridine 5'-phosphate (PsiMP) to ribose 5-phosphate and uracil. Functions biologically in the cleavage direction, as part of a pseudouridine degradation pathway. The protein is Pseudouridine-5'-phosphate glycosidase of Thermotoga maritima (strain ATCC 43589 / DSM 3109 / JCM 10099 / NBRC 100826 / MSB8).